The chain runs to 234 residues: UPF0502 protein Bphy_5360 (234 aa).

Belongs to the UPF0502 family.

This chain is UPF0502 protein Bphy_5360, found in Paraburkholderia phymatum (strain DSM 17167 / CIP 108236 / LMG 21445 / STM815) (Burkholderia phymatum).